The following is a 119-amino-acid chain: Protein TusC (119 aa).

It belongs to the DsrF/TusC family. Heterohexamer, formed by a dimer of trimers. The hexameric TusBCD complex contains 2 copies each of TusB, TusC and TusD. The TusBCD complex interacts with TusE.

The protein localises to the cytoplasm. Part of a sulfur-relay system required for 2-thiolation of 5-methylaminomethyl-2-thiouridine (mnm(5)s(2)U) at tRNA wobble positions. The sequence is that of Protein TusC from Sodalis glossinidius (strain morsitans).